The following is a 113-amino-acid chain: Parvalbumin beta (113 aa).

N-acetylalanine is present on A1. C18 carries S-linked (Glc) cysteine glycosylation. 2 consecutive EF-hand domains span residues 38–73 (FSADELKKLFKIADEDKEGFIEEDELKLFLIAFAAD) and 77–112 (LTDAETKAFLKAGDSDGDGKIGVDEFGALVDKWGAK). The Ca(2+) site is built by D51, D53, E55, F57, E59, E62, D90, D92, D94, K96, and E101.

Belongs to the parvalbumin family. As to expression, muscle (at protein level).

Functionally, in muscle, parvalbumin is thought to be involved in relaxation after contraction. It binds two calcium ions. The polypeptide is Parvalbumin beta (Gadus morhua subsp. callarias (Baltic cod)).